The chain runs to 99 residues: Ubiquitin-related modifier 1 homolog (99 aa).

Gly99 is modified (1-thioglycine). A Glycyl lysine isopeptide (Gly-Lys) (interchain with K-? in acceptor proteins) cross-link involves residue Gly99.

It belongs to the URM1 family. In terms of processing, C-terminal thiocarboxylation occurs in 2 steps, it is first acyl-adenylated (-COAMP) via the hesA/moeB/thiF part of the MOCS3 homolog, then thiocarboxylated (-COSH) via the rhodanese domain of the MOCS3 homolog.

The protein localises to the cytoplasm. The protein operates within tRNA modification; 5-methoxycarbonylmethyl-2-thiouridine-tRNA biosynthesis. In terms of biological role, acts as a sulfur carrier required for 2-thiolation of mcm(5)S(2)U at tRNA wobble positions of cytosolic tRNA(Lys), tRNA(Glu) and tRNA(Gln). Serves as sulfur donor in tRNA 2-thiolation reaction by being thiocarboxylated (-COSH) at its C-terminus by MOCS3. The sulfur is then transferred to tRNA to form 2-thiolation of mcm(5)S(2)U. Also acts as a ubiquitin-like protein (UBL) that is covalently conjugated via an isopeptide bond to lysine residues of target proteins. The thiocarboxylated form serves as substrate for conjugation and oxidative stress specifically induces the formation of UBL-protein conjugates. In Chlamydomonas reinhardtii (Chlamydomonas smithii), this protein is Ubiquitin-related modifier 1 homolog.